The sequence spans 480 residues: M-phase inducer phosphatase cdc-25.2 (480 aa).

Residues 1–20 are compositionally biased toward polar residues; the sequence is MNRPSQISQDVAQPLSNQHE. A disordered region spans residues 1-35; that stretch reads MNRPSQISQDVAQPLSNQHETAMMSSDEDSMSRDS. Residues 243-349 form the Rhodanese domain; sequence FDDKYILIDC…FFFAANEANI (107 aa). Residues 411–452 form a disordered region; it reads TSAPSTSTENIDTNDDCQKSRTPAVPRIASRRNLFSDPSHSP.

The protein belongs to the MPI phosphatase family.

The enzyme catalyses O-phospho-L-tyrosyl-[protein] + H2O = L-tyrosyl-[protein] + phosphate. Required for intestinal cell division following the 16E cell stage of embryogenesis. Regulates intestinal cell divisions and binucleations probably by modulating the activity of the cell cycle regulator wee-1.3 and by activating the cdk-1/cyb-1 complex. Plays a role in male tail development, via regulation of the cell divisions of the ray precursor cell lineages, perhaps acting together with cell cycle regulators cyl-1, cdk-1, cyb-3, and cyd-1. This is M-phase inducer phosphatase cdc-25.2 from Caenorhabditis elegans.